Reading from the N-terminus, the 312-residue chain is Homoserine kinase (312 aa).

91–101 is a binding site for ATP; sequence PVASGLGSSAC.

This sequence belongs to the GHMP kinase family. Homoserine kinase subfamily.

The protein localises to the cytoplasm. It catalyses the reaction L-homoserine + ATP = O-phospho-L-homoserine + ADP + H(+). It functions in the pathway amino-acid biosynthesis; L-threonine biosynthesis; L-threonine from L-aspartate: step 4/5. Its function is as follows. Catalyzes the ATP-dependent phosphorylation of L-homoserine to L-homoserine phosphate. This chain is Homoserine kinase, found in Blochmanniella pennsylvanica (strain BPEN).